Here is a 197-residue protein sequence, read N- to C-terminus: uncharacterized protein (197 aa).

The next 6 membrane-spanning stretches (helical) occupy residues 5 to 23, 27 to 46, 55 to 77, 87 to 109, 116 to 138, and 153 to 174; these read LNLLIFFIAALLIALGLRF, ISFAGLILLLAVVPALMLRF, VIAGIFVLGLALNALIGVALAYT, LSLLPLTLVLTANVFATSLVIRI, VFAFYFWFLISVGLAFLFLLPTG, and FVEFPILYSELALIPSAFCLVF.

The protein localises to the cell membrane. This is an uncharacterized protein from Archaeoglobus fulgidus (strain ATCC 49558 / DSM 4304 / JCM 9628 / NBRC 100126 / VC-16).